The sequence spans 428 residues: Serine--tRNA ligase (428 aa).

235–237 serves as a coordination point for L-serine; the sequence is TAE. Residue 266-268 participates in ATP binding; it reads RSE. Glu289 contributes to the L-serine binding site. 353–356 serves as a coordination point for ATP; the sequence is EISS. Residue Ser389 participates in L-serine binding.

Belongs to the class-II aminoacyl-tRNA synthetase family. Type-1 seryl-tRNA synthetase subfamily. Homodimer. The tRNA molecule binds across the dimer.

It localises to the cytoplasm. It carries out the reaction tRNA(Ser) + L-serine + ATP = L-seryl-tRNA(Ser) + AMP + diphosphate + H(+). It catalyses the reaction tRNA(Sec) + L-serine + ATP = L-seryl-tRNA(Sec) + AMP + diphosphate + H(+). Its pathway is aminoacyl-tRNA biosynthesis; selenocysteinyl-tRNA(Sec) biosynthesis; L-seryl-tRNA(Sec) from L-serine and tRNA(Sec): step 1/1. In terms of biological role, catalyzes the attachment of serine to tRNA(Ser). Is also able to aminoacylate tRNA(Sec) with serine, to form the misacylated tRNA L-seryl-tRNA(Sec), which will be further converted into selenocysteinyl-tRNA(Sec). The sequence is that of Serine--tRNA ligase from Shewanella frigidimarina (strain NCIMB 400).